The chain runs to 241 residues: ATP synthase subunit a (241 aa).

Helical transmembrane passes span 30–50 (GQVFMTSWIVIGAILALVVVG), 91–111 (FIGTLFLFIFVSNWGGSLVPW), 128–148 (INTTVALALLVSLSYFYAGLS), 193–213 (LVVAVLVFLVPLFLPVPVMFL), and 214–234 (GLFTSAIQALIFATLAAYYIG).

This sequence belongs to the ATPase A chain family. As to quaternary structure, F-type ATPases have 2 components, CF(1) - the catalytic core - and CF(0) - the membrane proton channel. CF(1) has five subunits: alpha(3), beta(3), gamma(1), delta(1), epsilon(1). CF(0) has four main subunits: a, b, b' and c.

The protein localises to the cellular thylakoid membrane. Functionally, key component of the proton channel; it plays a direct role in the translocation of protons across the membrane. The chain is ATP synthase subunit a from Prochlorococcus marinus (strain MIT 9313).